Consider the following 415-residue polypeptide: Palmitoyl-acyl carrier protein thioesterase, chloroplastic (415 aa).

Low complexity-rich tracts occupy residues 1 to 16 (MVAT…LPSA) and 24 to 41 (KLGN…KSTP). A chloroplast-targeting transit peptide spans 1–60 (MVATAASSAFFPLPSADTSSRPGKLGNKPSSLSPLKPKSTPNGGLQVKANASAPPKINGS). The interval 1-81 (MVATAASSAF…QEDAHSAPPP (81 aa)) is disordered. Catalysis depends on residues Asn-314, His-316, and Cys-351.

It belongs to the acyl-ACP thioesterase family.

The protein localises to the plastid. Its subcellular location is the chloroplast. The catalysed reaction is hexadecanoyl-[ACP] + H2O = hexadecanoate + holo-[ACP] + H(+). Its function is as follows. Plays an essential role in chain termination during de novo fatty acid synthesis. High thioesterase activity for palmitoyl-ACP versus other acyl-ACPs. The protein is Palmitoyl-acyl carrier protein thioesterase, chloroplastic (FATB1) of Cuphea hookeriana (Cigar plant).